A 1029-amino-acid chain; its full sequence is Pro-apoptotic serine protease NMA111 (1029 aa).

Positions 1-49 are disordered; the sequence is MNGPTSQRAKRKQGSASSLDDRPPKHQRALNGAKQQSTGDNTPEEDMYD. Positions 84–274 are serine protease; it reads VVSIRFCQTC…LPLDRPLRAL (191 aa). Active-site charge relay system residues include H122, D153, and S235. PDZ domains follow at residues 307–379 and 845–958; these read PEWE…QRGG and EFLG…VTFD. The disordered stretch occupies residues 997–1029; the sequence is KAMEGEPSEGVPAVEEEAGGAVDDDVPMAAVEK. Over residues 1010–1022 the composition is skewed to acidic residues; it reads VEEEAGGAVDDDV.

Belongs to the peptidase S1C family.

It is found in the nucleus. Nuclear serine protease which mediates apoptosis. The sequence is that of Pro-apoptotic serine protease NMA111 (NMA111) from Pyricularia oryzae (strain 70-15 / ATCC MYA-4617 / FGSC 8958) (Rice blast fungus).